A 532-amino-acid polypeptide reads, in one-letter code: Optineurin (532 aa).

2 coiled-coil regions span residues 27–143 (SMKN…LKLG) and 195–466 (EEVA…EEMM). The CCHC NOA-type zinc finger occupies 502 to 532 (QPSITVYTCPKCNLTVPDMDTLQIHVMDCIT). Zn(2+) is bound by residues Cys-510, Cys-513, His-526, and Cys-530.

The protein localises to the cytoplasm. Its subcellular location is the perinuclear region. It is found in the golgi apparatus. The protein resides in the trans-Golgi network. It localises to the cytoplasmic vesicle. The protein localises to the recycling endosome. Its subcellular location is the autophagosome. In terms of biological role, probably part of the TNF-alpha signaling pathway that can shift the equilibrium toward induction of cell death. May act by regulating membrane trafficking and cellular morphogenesis. This is Optineurin (optn) from Xenopus laevis (African clawed frog).